Reading from the N-terminus, the 984-residue chain is Respiratory nitrate reductase subunit alpha (984 aa).

A disordered region spans residues 1 to 43 (MSRNDASQLDDGETTAESPPDDQANDAPEVGDPPGDPVDADSG). Acidic residues predominate over residues 8-24 (QLDDGETTAESPPDDQA). In terms of domain architecture, 4Fe-4S Mo/W bis-MGD-type spans 103–167 (DSVSRSTHSV…CYTDYVNADQ (65 aa)). [4Fe-4S] cluster contacts are provided by His-110, Cys-114, Cys-118, and Cys-153. Residue Asp-249 coordinates Mo-bis(molybdopterin guanine dinucleotide).

It belongs to the prokaryotic molybdopterin-containing oxidoreductase family. In terms of assembly, probable multiprotein complex; a catalytic heterodimer of an alpha and beta chain is proposed to associate with additional subunits involved in membrane attachment and electron transfer. The cofactor is [4Fe-4S] cluster. It depends on Mo-bis(molybdopterin guanine dinucleotide) as a cofactor. In terms of processing, exported by the Tat system.

The protein resides in the cell membrane. The catalysed reaction is nitrate + a quinol = a quinone + nitrite + H2O. Its activity is regulated as follows. Inhibited by cyanide, azide and antimycin A. Enzyme stability is not dependent on salt concentration. Its function is as follows. The respiratory membrane-bound nitrate reductase enzyme complex plays a role in generation of metabolic energy by using nitrate as a terminal electron acceptor during anaerobic conditions. The alpha chain is the actual site of nitrate reduction. The sequence is that of Respiratory nitrate reductase subunit alpha (narG) from Haloferax mediterranei (strain ATCC 33500 / DSM 1411 / JCM 8866 / NBRC 14739 / NCIMB 2177 / R-4) (Halobacterium mediterranei).